A 229-amino-acid polypeptide reads, in one-letter code: Uracil-DNA glycosylase (229 aa).

D64 serves as the catalytic Proton acceptor.

Belongs to the uracil-DNA glycosylase (UDG) superfamily. UNG family.

It localises to the cytoplasm. It catalyses the reaction Hydrolyzes single-stranded DNA or mismatched double-stranded DNA and polynucleotides, releasing free uracil.. Its function is as follows. Excises uracil residues from the DNA which can arise as a result of misincorporation of dUMP residues by DNA polymerase or due to deamination of cytosine. This Salmonella arizonae (strain ATCC BAA-731 / CDC346-86 / RSK2980) protein is Uracil-DNA glycosylase.